A 143-amino-acid polypeptide reads, in one-letter code: MLSPKKTKFRKQFKGRIHGTSKGGTLLNFGSYGLKAVEPERITARQIEAARRAITRQMKRQGRVWIRIFPDVPVTGKPAEVRMGKGKGAVDYWAARVAPGRIMFEIDGVPDDIAREALRLGAAKLPIRTRVVTRIDAGVAQEA.

Belongs to the universal ribosomal protein uL16 family. Part of the 50S ribosomal subunit.

Binds 23S rRNA and is also seen to make contacts with the A and possibly P site tRNAs. This chain is Large ribosomal subunit protein uL16, found in Caulobacter vibrioides (strain ATCC 19089 / CIP 103742 / CB 15) (Caulobacter crescentus).